We begin with the raw amino-acid sequence, 113 residues long: MNTVRVTFLLVFVLAVSLGRADKEENRMEMQEKTEQGKSYLDFAENLLLQKLEELEAKLLEEDSEESRNSRQKRCIGEGVPCDENDPRCCSGLVCLKPTLHGIWYKSYYCYKK.

The first 21 residues, 1–21, serve as a signal peptide directing secretion; the sequence is MNTVRVTFLLVFVLAVSLGRA. Residues 22–74 constitute a propeptide that is removed on maturation; the sequence is DKEENRMEMQEKTEQGKSYLDFAENLLLQKLEELEAKLLEEDSEESRNSRQKR. Residues 61 to 83 are disordered; that stretch reads EEDSEESRNSRQKRCIGEGVPCD. 3 disulfide bridges follow: Cys-75-Cys-90, Cys-82-Cys-95, and Cys-89-Cys-110.

It belongs to the neurotoxin 14 (magi-1) family. 01 (HNTX-16) subfamily. In terms of tissue distribution, expressed by the venom gland.

The protein resides in the secreted. In terms of biological role, probable ion channel inhibitor. The polypeptide is U11-theraphotoxin-Hhn1a (Cyriopagopus hainanus (Chinese bird spider)).